The following is a 531-amino-acid chain: MNESVARVFDRILRGLGLKTLNAQFLLSYALMFGLAACASVALYLSMSISPETINVAGAQRMLSQKMAREALQLRLGAGDPKALAATIAQYERSAADLDAGNAERNVSRMGAPEIAAQRQKVAQIWGRYRAMLDQVAQPASQVDLRGFSQYSTELLGELNNLVSLMSARADSVQHTQMWIAFGCLLAILVLVVLGRQFGLAPLMRQLRGLEVALTEVGAANFTHALAAGHADNEIGRIVAGYERMRQDVSGLLANVKRSAAETDKDVAEALEQALGAGDQVARQHQDLDQVATAMNEMSATVAEVARHANHAAHSTRDAAALAHEGRRLVEHASSQTGALAEELEQTALALNTLHQHAGSVGQVLTVISSIAEQTNLLALNAAIEAARAGEAGRGFAVVADEVRSLANRTQQSTQEIQGLIEQLQDGANDAVAAMRGSASHAQSNLVEADSAAQALGRIVATVEELDGLNQQIATAAEEQSQVAQDIDRNITNVSGLSEQAHEGTAAVLSANQRVKEHMAGLRVVLGRFRT.

Topologically, residues 1-24 (MNESVARVFDRILRGLGLKTLNAQ) are cytoplasmic. Residues 25–45 (FLLSYALMFGLAACASVALYL) form a helical membrane-spanning segment. Residues 46–174 (SMSISPETIN…LMSARADSVQ (129 aa)) lie on the Periplasmic side of the membrane. Residues 52–140 (ETINVAGAQR…AMLDQVAQPA (89 aa)) form a pilJ-type region. Residues 54 to 65 (INVAGAQRMLSQ) carry the N-box motif. Arg-61 contacts nitrate. The chain crosses the membrane as a helical span at residues 175 to 195 (HTQMWIAFGCLLAILVLVVLG). Over 196 to 531 (RQFGLAPLMR…LRVVLGRFRT (336 aa)) the chain is Cytoplasmic. Positions 201-254 (APLMRQLRGLEVALTEVGAANFTHALAAGHADNEIGRIVAGYERMRQDVSGLLA) constitute an HAMP domain. A Methyl-accepting transducer domain is found at 259–495 (SAAETDKDVA…DIDRNITNVS (237 aa)).

This sequence belongs to the methyl-accepting chemotaxis (MCP) protein family. As to quaternary structure, ligand free ligand-binding domain (LBD) is present in a monomer-dimer equilibrium. Nitrate binding to the periplasmic LBD stabilizes the homodimer.

Its subcellular location is the cell inner membrane. Its function is as follows. Chemotactic-signal transducers respond to changes in the concentration of attractants and repellents in the environment, transduce a signal from the outside to the inside of the cell, and facilitate sensory adaptation through the variation of the level of methylation. McpN is a chemoreceptor that recognizes specifically nitrate and mediates chemoattraction. Binds nitrate specifically and shows no affinity for other ligands such as nitrite. McpN-mediated taxis occurs only under nitrate starvation conditions. The sequence is that of Methyl-accepting chemotaxis protein McpN from Pseudomonas aeruginosa (strain ATCC 15692 / DSM 22644 / CIP 104116 / JCM 14847 / LMG 12228 / 1C / PRS 101 / PAO1).